We begin with the raw amino-acid sequence, 673 residues long: DNA ligase (673 aa).

NAD(+) is bound by residues 36 to 40, 85 to 86, and E116; these read DAEYD and SL. Residue K118 is the N6-AMP-lysine intermediate of the active site. Residues R139, E176, K291, and K315 each contribute to the NAD(+) site. Positions 409, 412, 427, and 433 each coordinate Zn(2+). The region spanning 592 to 673 is the BRCT domain; it reads RGEQPLAGRT…LQALLQEHGR (82 aa).

The protein belongs to the NAD-dependent DNA ligase family. LigA subfamily. Mg(2+) is required as a cofactor. Mn(2+) serves as cofactor.

The catalysed reaction is NAD(+) + (deoxyribonucleotide)n-3'-hydroxyl + 5'-phospho-(deoxyribonucleotide)m = (deoxyribonucleotide)n+m + AMP + beta-nicotinamide D-nucleotide.. Functionally, DNA ligase that catalyzes the formation of phosphodiester linkages between 5'-phosphoryl and 3'-hydroxyl groups in double-stranded DNA using NAD as a coenzyme and as the energy source for the reaction. It is essential for DNA replication and repair of damaged DNA. The chain is DNA ligase from Alkalilimnicola ehrlichii (strain ATCC BAA-1101 / DSM 17681 / MLHE-1).